The sequence spans 107 residues: MAIMKKTSKLTQTAMLKQILKRCSSLGKKNGGGYDEDCLPLDVPKGHFPVYVGENRSRYIVPISFLTHPEFQSLLQRAEEEFGFDHDMGLTIPCDELVFQTLTSMIR.

It belongs to the ARG7 family. As to quaternary structure, interacts with BZR1. Expressed in cotyledons, leaves, flowers and siliques.

The protein resides in the cell membrane. Provide a mechanistic link between auxin and plasma membrane H(+)-ATPases (PM H(+)-ATPases, e.g. AHA1 and AHA2), and triggers PM H(+)-ATPases activity by promoting phosphorylation of their C-terminal autoinhibitory domain as a result of PP2C-D subfamily of type 2C phosphatases inhibition, thus leading to the acidification of the apoplast and the facilitation of solutes and water uptake to drive cell expansion. Triggers plant growth probably by promoting cell elongation. Regulates branch angles and bending. Effector of hormonal and environmental signals in plant growth. This Arabidopsis thaliana (Mouse-ear cress) protein is Auxin-responsive protein SAUR50.